Consider the following 659-residue polypeptide: MPDVSQRIEALREQIEEANYQYYGLDQPTLSDAEYDALLQELIRLEKEHPEFLTPDSPSQRVGGYIAKEFPKVRHAEALLSLDNAFDAGDLLEFDRRVRALVAEVEYVVELKIDGLTVALTYEDGALVRGATRGDGEVGEEITANLKTIPAIPLRLRKQADRLDVRGEGYMPKGSFLRLNQEREEAGQPLFANPRNAAAGSLRQLDSRITAQRKLGYFAYQVLTPEEGELASQTAVLDYLKEQGFSVNPEYRVFSAIEEVIAYCGEMVEKRHNYPYDIDGLVIKVNDIAQQRELGFTAKSPRWAIAYKFPAEQVETVVEDIVIRVGRTGVLTPTAYLTPVFVAGSTVGRATLHNLDNIRAKDVRIGDHVLIQKAGDVIPEVVKILPEKRTGGERIFEMPELCPECQSPVIREEGEAAHRCTSITCPARQREAIIHFVSRNAMNIDGLGPAVIYQLLEAGLIKDAADLYALEYDALVPLERLGKKSAENLLKAIEDSKERGLAPLIFGLGIRHVGEKAGKILAQKYGTMEDLEKAQVEELQEIPDVGPAMAQSVAQFFQQESTHHFLNKLRQAGVVMSAQHSAKPQIFAGKSIVVTGSLQRWDRHYVETMIEEFGGKAASSVSKKTAFVVAGEKAGSKLAKAKELGIPVLSEEEFAELLP.

NAD(+) contacts are provided by residues 32–36, 81–82, and glutamate 110; these read DAEYD and SL. Lysine 112 (N6-AMP-lysine intermediate) is an active-site residue. Arginine 133, glutamate 168, lysine 284, and lysine 308 together coordinate NAD(+). Residues cysteine 402, cysteine 405, cysteine 420, and cysteine 425 each contribute to the Zn(2+) site. Positions 582 to 659 constitute a BRCT domain; the sequence is AKPQIFAGKS…SEEEFAELLP (78 aa).

The protein belongs to the NAD-dependent DNA ligase family. LigA subfamily. Requires Mg(2+) as cofactor. The cofactor is Mn(2+).

It catalyses the reaction NAD(+) + (deoxyribonucleotide)n-3'-hydroxyl + 5'-phospho-(deoxyribonucleotide)m = (deoxyribonucleotide)n+m + AMP + beta-nicotinamide D-nucleotide.. DNA ligase that catalyzes the formation of phosphodiester linkages between 5'-phosphoryl and 3'-hydroxyl groups in double-stranded DNA using NAD as a coenzyme and as the energy source for the reaction. It is essential for DNA replication and repair of damaged DNA. This chain is DNA ligase, found in Desulfitobacterium hafniense (strain Y51).